A 340-amino-acid polypeptide reads, in one-letter code: Glycerol-3-phosphate dehydrogenase [NAD(P)+] (340 aa).

The NADPH site is built by S14, F15, R35, and K109. Sn-glycerol 3-phosphate is bound by residues K109 and G137. A141 is a binding site for NADPH. K192, D245, S255, R256, and N257 together coordinate sn-glycerol 3-phosphate. K192 (proton acceptor) is an active-site residue. R256 contacts NADPH. The NADPH site is built by V280 and E282.

This sequence belongs to the NAD-dependent glycerol-3-phosphate dehydrogenase family.

Its subcellular location is the cytoplasm. It carries out the reaction sn-glycerol 3-phosphate + NAD(+) = dihydroxyacetone phosphate + NADH + H(+). The catalysed reaction is sn-glycerol 3-phosphate + NADP(+) = dihydroxyacetone phosphate + NADPH + H(+). The protein operates within membrane lipid metabolism; glycerophospholipid metabolism. In terms of biological role, catalyzes the reduction of the glycolytic intermediate dihydroxyacetone phosphate (DHAP) to sn-glycerol 3-phosphate (G3P), the key precursor for phospholipid synthesis. The protein is Glycerol-3-phosphate dehydrogenase [NAD(P)+] of Teredinibacter turnerae (strain ATCC 39867 / T7901).